Consider the following 210-residue polypeptide: Ribonuclease HII (210 aa).

Positions 17 to 206 constitute an RNase H type-2 domain; sequence DIICGVDEAG…VRALLGGVTP (190 aa). Aspartate 23, glutamate 24, and aspartate 115 together coordinate a divalent metal cation.

Belongs to the RNase HII family. Mn(2+) serves as cofactor. It depends on Mg(2+) as a cofactor.

It is found in the cytoplasm. The enzyme catalyses Endonucleolytic cleavage to 5'-phosphomonoester.. In terms of biological role, endonuclease that specifically degrades the RNA of RNA-DNA hybrids. This is Ribonuclease HII from Janthinobacterium sp. (strain Marseille) (Minibacterium massiliensis).